An 87-amino-acid polypeptide reads, in one-letter code: Selenoprotein W (87 aa).

Residues 10-13 constitute a cross-link (cysteinyl-selenocysteine (Cys-Sec); redox-active); the sequence is CGAU. A non-standard amino acid (selenocysteine) is located at residue selenocysteine 13. An S-glutathionyl cysteine modification is found at cysteine 37.

The protein belongs to the SelWTH family. Selenoprotein W subfamily. In terms of assembly, interacts with DPYSL2, PRDX1, YWHAB, YWHAG, HSP70 and HSP90. As to expression, highest levels detected in skeletal muscle, tongue, heart and brain. Expressed at significantly higher levels in female skeletal muscle than in male and at slightly higher levels in female cardiac muscle than in male (at protein level). Also detected at low levels in liver.

Its subcellular location is the cytoplasm. Functionally, plays a role as a glutathione (GSH)-dependent antioxidant. May be involved in a redox-related process. May play a role in the myopathies of selenium deficiency. This is Selenoprotein W from Macaca mulatta (Rhesus macaque).